A 398-amino-acid polypeptide reads, in one-letter code: Phosphoglycerate kinase (398 aa).

Residues 23-25 (DFN), R38, 61-64 (HMGK), R122, and R155 contribute to the substrate site. Residues K206, G297, E328, and 354–357 (GGDS) contribute to the ATP site.

Belongs to the phosphoglycerate kinase family. Monomer.

It is found in the cytoplasm. It carries out the reaction (2R)-3-phosphoglycerate + ATP = (2R)-3-phospho-glyceroyl phosphate + ADP. Its pathway is carbohydrate degradation; glycolysis; pyruvate from D-glyceraldehyde 3-phosphate: step 2/5. The polypeptide is Phosphoglycerate kinase (Clostridium botulinum (strain Hall / ATCC 3502 / NCTC 13319 / Type A)).